The primary structure comprises 293 residues: ATP synthase gamma chain (293 aa).

It belongs to the ATPase gamma chain family. As to quaternary structure, F-type ATPases have 2 components, CF(1) - the catalytic core - and CF(0) - the membrane proton channel. CF(1) has five subunits: alpha(3), beta(3), gamma(1), delta(1), epsilon(1). CF(0) has three main subunits: a, b and c.

It localises to the cell inner membrane. In terms of biological role, produces ATP from ADP in the presence of a proton gradient across the membrane. The gamma chain is believed to be important in regulating ATPase activity and the flow of protons through the CF(0) complex. The chain is ATP synthase gamma chain from Nitrosospira multiformis (strain ATCC 25196 / NCIMB 11849 / C 71).